Reading from the N-terminus, the 357-residue chain is Quinolinate synthase (357 aa).

Iminosuccinate-binding residues include H50 and S71. Residue C116 coordinates [4Fe-4S] cluster. Iminosuccinate-binding positions include 142-144 (YAN) and S159. C203 serves as a coordination point for [4Fe-4S] cluster. Iminosuccinate contacts are provided by residues 229-231 (HPE) and T246. Residue C300 coordinates [4Fe-4S] cluster.

It belongs to the quinolinate synthase family. Type 1 subfamily. [4Fe-4S] cluster is required as a cofactor.

The protein localises to the cytoplasm. The enzyme catalyses iminosuccinate + dihydroxyacetone phosphate = quinolinate + phosphate + 2 H2O + H(+). It participates in cofactor biosynthesis; NAD(+) biosynthesis; quinolinate from iminoaspartate: step 1/1. Its function is as follows. Catalyzes the condensation of iminoaspartate with dihydroxyacetone phosphate to form quinolinate. This is Quinolinate synthase from Shewanella sp. (strain ANA-3).